The following is a 382-amino-acid chain: uncharacterized protein (382 aa).

12 helical membrane-spanning segments follow: residues 14-34, 45-65, 79-99, 102-122, 131-151, 157-177, 204-224, 235-255, 270-290, 291-311, 325-345, and 348-368; these read GLLL…LWLA, VVSS…GYVI, FIFA…SWLA, FVAG…LMCS, LLAA…LLVS, LMSV…PLLF, LGVN…GLMP, ASIG…QWPI, VQVF…AMAP, ALFI…AWAC, ALLL…AMLM, and FSDN…LLML.

This sequence belongs to the major facilitator superfamily. YcaD (TC 2.A.1.26) family.

The protein resides in the cell inner membrane. This is an uncharacterized protein from Escherichia coli O45:K1 (strain S88 / ExPEC).